Here is a 728-residue protein sequence, read N- to C-terminus: Cytosolic endo-beta-N-acetylglucosaminidase (728 aa).

Residues Gln-287–Trp-381 enclose the BRCT domain.

Belongs to the glycosyl hydrolase 85 family.

The protein localises to the cytoplasm. It is found in the cytosol. It catalyses the reaction an N(4)-(oligosaccharide-(1-&gt;3)-[oligosaccharide-(1-&gt;6)]-beta-D-Man-(1-&gt;4)-beta-D-GlcNAc-(1-&gt;4)-alpha-D-GlcNAc)-L-asparaginyl-[protein] + H2O = an oligosaccharide-(1-&gt;3)-[oligosaccharide-(1-&gt;6)]-beta-D-Man-(1-&gt;4)-D-GlcNAc + N(4)-(N-acetyl-beta-D-glucosaminyl)-L-asparaginyl-[protein]. Functionally, endoglycosidase that releases N-glycans from glycoproteins by cleaving the beta-1,4-glycosidic bond in the N,N'-diacetylchitobiose core. Involved in the processing of free oligosaccharides in the cytosol. The protein is Cytosolic endo-beta-N-acetylglucosaminidase (ENGASE) of Gallus gallus (Chicken).